A 362-amino-acid polypeptide reads, in one-letter code: F-box protein At2g14710 (362 aa).

Residues 1–47 (MAHLKNLPWELIEEILSRVPPKSLVRFRTVSKQWNALFDDKTFINNH) form the F-box domain.

This is F-box protein At2g14710 from Arabidopsis thaliana (Mouse-ear cress).